The primary structure comprises 394 residues: Elongation factor Tu (394 aa).

Positions 10-204 (KPHVNVGTIG…ALDSYIPEPE (195 aa)) constitute a tr-type G domain. A G1 region spans residues 19–26 (GHVDHGKT). Residue 19–26 (GHVDHGKT) coordinates GTP. Threonine 26 is a binding site for Mg(2+). Positions 60–64 (GITIN) are G2. Residues 81-84 (DCPG) form a G3 region. GTP is bound by residues 81–85 (DCPGH) and 136–139 (NKCD). A G4 region spans residues 136-139 (NKCD). The segment at 174–176 (SAL) is G5.

The protein belongs to the TRAFAC class translation factor GTPase superfamily. Classic translation factor GTPase family. EF-Tu/EF-1A subfamily. As to quaternary structure, monomer.

The protein resides in the cytoplasm. It catalyses the reaction GTP + H2O = GDP + phosphate + H(+). Its function is as follows. GTP hydrolase that promotes the GTP-dependent binding of aminoacyl-tRNA to the A-site of ribosomes during protein biosynthesis. The protein is Elongation factor Tu of Shewanella amazonensis (strain ATCC BAA-1098 / SB2B).